We begin with the raw amino-acid sequence, 476 residues long: Calcium uptake protein 1, mitochondrial (476 aa).

The transit peptide at 1–33 directs the protein to the mitochondrion; the sequence is MFRLNSLSALAELAVGSRWYHGGSQPIQIRRRL. The interval 68-106 is disordered; it reads SDIGDKGKNKDEGDVCNHEKKTADLAPHPEEKKKKRSGF. A polybasic region region spans residues 99–110; that stretch reads KKKKRSGFRDRK. Position 122 is a phosphoserine (Ser122). The interval 126–129 is k/R-ring; sequence KIFR. Positions 218-253 constitute an EF-hand 1 domain; the sequence is TPQRNFEIAFKMFDLNGDGEVDMEEFEQVQSIIRSQ. Ca(2+) is bound by residues Asp231, Asn233, Asp235, Glu237, and Glu242. Positions 259–263 are k/R-ring; sequence RHRDR. An EF-hand 2 domain is found at 408–443; it reads LSDHVCDVVFALFDCDGNGELSNKEFVSIMKQRLMR. Ca(2+) contacts are provided by Asp421, Asp423, Asn425, Glu427, and Glu432. Asymmetric dimethylarginine is present on Arg455. Positions 455-465 are C-helix region; the sequence is RLMQAMWKCAQ.

Belongs to the MICU1 family. MICU1 subfamily. In terms of assembly, heterodimer; disulfide-linked; heterodimerizes with MICU2 or MICU3. Homodimer; disulfide-linked. Component of the uniplex complex, composed of MCU, EMRE/SMDT1, MICU1 and MICU2 (or MICU3) in a 4:4:1:1 stoichiometry. The composition of calcium sensors within the uniplex complex can differ depending on tissues: a MICU1 homodimer can be present instead of the MICU1-MICU2 heterodimer in skeletal-muscle and kidney. MICU1 is recruited to the uniplex complex by EMRE/SMDT1, and it associates with MCU at low calcium levels, occluding the pore of the MCU channel. Associates with the MICOS complex. Interacts with SLC25A23. Interacts with CHCHD4/MIA40; which introduces the interchain disulfide bond with MICU2. Interacts (when methylated) with UCP2; leading to decrease the calcium sensitivity of MICU1. Post-translationally, phosphorylation at Ser-122 by AKT1 impairs its maturation and stability. In terms of processing, asymmetric dimethylation at Arg-455 by PRMT1 decreases the calcium sensitivity of MICU1 by promoting interaction with UCP2. Degraded by YME1L1 when not complexed as homodimer or heterodimer. Not degraded when complexed as homodimer or heterodimer; the presence of the interchain disulfide bond protecting MICU1 from degradation by YME1L1. In terms of tissue distribution, expressed in epithelial cell lines. Strongly expressed in epidermal keratinocytes and dermal endothelial cells.

The protein localises to the mitochondrion intermembrane space. It is found in the mitochondrion inner membrane. With respect to regulation, activated by spermine, kaempferol and SB202190, which bind MICU1 and prevent MCU pore occlusion in absence of calcium. In terms of biological role, calcium sensor of the mitochondrial calcium uniporter (MCU) channel, which senses calcium level via its EF-hand domains. MICU1 and MICU2 (or MICU3) form a disulfide-linked heterodimer that stimulates and inhibits MCU activity, depending on the concentration of calcium. At low calcium levels, MICU1 occludes the pore of the MCU channel, preventing mitochondrial calcium uptake. At higher calcium levels, calcium-binding to MICU1 and MICU2 (or MICU3) induces a conformational change that weakens MCU-MICU1 interactions and moves the MICU1-MICU2 heterodimer away from the pore, allowing calcium permeation through the MCU channel. Also required to protect against manganese toxicity by preventing manganese uptake by MCU: mechanistically, manganese-binding to its EF-hand domains does not induce any conformational change, maintaining MCU pore occlusion. Also acts as a barrier for inhibitors of the MCU channel, such as ruthenium red or its derivative Ru360. Acts as a regulator of mitochondrial cristae structure independently of its ability to regulate the mitochondrial calcium uniporter channel. Regulates glucose-dependent insulin secretion in pancreatic beta-cells by regulating mitochondrial calcium uptake. Induces T-helper 1-mediated autoreactivity, which is accompanied by the release of IFNG. Its function is as follows. Isoform that regulates mitochondrial calcium uniporter (MCU) in the skeletal muscle. Compared to other isoforms, this isoform has higher affinity for calcium, promoting mitochondrial calcium uptake at lower calcium concentrations. This allows a rapid response of mitochondrial metabolism and ensures sustained ATP production needed for resistance and strenuous exercise. This is Calcium uptake protein 1, mitochondrial from Homo sapiens (Human).